A 548-amino-acid polypeptide reads, in one-letter code: Biotin-dependent acetyl-/propionyl-coenzyme A carboxylase beta5 subunit (548 aa).

The interval 1–23 (MTSVTDRSAHSAERSTEHTIDIH) is disordered. Over residues 7–21 (RSAHSAERSTEHTID) the composition is skewed to basic and acidic residues. The CoA carboxyltransferase N-terminal domain occupies 25-281 (TAGKLAELHK…NNSTDAPRYQ (257 aa)). Residues 295-541 (DEDLELDTLI…ERKIAQLPPK (247 aa)) enclose the CoA carboxyltransferase C-terminal domain.

This sequence belongs to the AccD/PCCB family. In terms of assembly, the biotin-dependent acyl-CoA carboxylase complex is composed of AccA3, which contains the biotin carboxylase (BC) and biotin carboxyl carrier protein (BCCP) domains, and AccD5, which contains the carboxyl transferase (CT) domain.

The enzyme catalyses N(6)-carboxybiotinyl-L-lysyl-[protein] + acetyl-CoA = N(6)-biotinyl-L-lysyl-[protein] + malonyl-CoA. It catalyses the reaction N(6)-carboxybiotinyl-L-lysyl-[protein] + propanoyl-CoA = methylmalonyl-CoA + N(6)-biotinyl-L-lysyl-[protein]. It participates in lipid metabolism; mycolic acid biosynthesis. Component of a biotin-dependent acyl-CoA carboxylase complex. This subunit transfers the CO2 from carboxybiotin to the CoA ester substrate. When associated with the alpha3 subunit AccA3, is involved in the carboxylation of acetyl-CoA and propionyl-CoA. The sequence is that of Biotin-dependent acetyl-/propionyl-coenzyme A carboxylase beta5 subunit (accD5) from Mycobacterium tuberculosis (strain CDC 1551 / Oshkosh).